The sequence spans 375 residues: uncharacterized protein (375 aa).

This sequence belongs to the mimivirus L17x/L18x family.

This is an uncharacterized protein from Acanthamoeba polyphaga mimivirus (APMV).